The following is a 426-amino-acid chain: Adenylosuccinate synthetase (426 aa).

GTP contacts are provided by residues 12–18 (GDEGKGK) and 40–42 (GHT). The Proton acceptor role is filled by Asp13. Mg(2+) contacts are provided by Asp13 and Gly40. IMP is bound by residues 13–16 (DEGK), 38–41 (NAGH), Thr128, Arg142, Gln223, Thr238, and Arg302. The active-site Proton donor is the His41. 298–304 (TTTGRAR) lines the substrate pocket. GTP-binding positions include Arg304, 330-332 (KLD), and 412-414 (SVG).

This sequence belongs to the adenylosuccinate synthetase family. As to quaternary structure, homodimer. Requires Mg(2+) as cofactor.

It localises to the cytoplasm. It catalyses the reaction IMP + L-aspartate + GTP = N(6)-(1,2-dicarboxyethyl)-AMP + GDP + phosphate + 2 H(+). It participates in purine metabolism; AMP biosynthesis via de novo pathway; AMP from IMP: step 1/2. Functionally, plays an important role in the de novo pathway of purine nucleotide biosynthesis. Catalyzes the first committed step in the biosynthesis of AMP from IMP. The protein is Adenylosuccinate synthetase of Thermoanaerobacter pseudethanolicus (strain ATCC 33223 / 39E) (Clostridium thermohydrosulfuricum).